We begin with the raw amino-acid sequence, 463 residues long: tRNA-2-methylthio-N(6)-dimethylallyladenosine synthase (463 aa).

Positions 18–136 (RKLYIETYGC…LPNLVGAAEQ (119 aa)) constitute an MTTase N-terminal domain. Positions 27, 63, 100, 174, 178, and 181 each coordinate [4Fe-4S] cluster. Residues 160 to 392 (GGVHINGFVS…IALQNRLSEE (233 aa)) enclose the Radical SAM core domain. A TRAM domain is found at 395–458 (KRDIGKTFEV…SATLFGEVVE (64 aa)).

Belongs to the methylthiotransferase family. MiaB subfamily. Monomer. [4Fe-4S] cluster is required as a cofactor.

The protein resides in the cytoplasm. It catalyses the reaction N(6)-dimethylallyladenosine(37) in tRNA + (sulfur carrier)-SH + AH2 + 2 S-adenosyl-L-methionine = 2-methylsulfanyl-N(6)-dimethylallyladenosine(37) in tRNA + (sulfur carrier)-H + 5'-deoxyadenosine + L-methionine + A + S-adenosyl-L-homocysteine + 2 H(+). Functionally, catalyzes the methylthiolation of N6-(dimethylallyl)adenosine (i(6)A), leading to the formation of 2-methylthio-N6-(dimethylallyl)adenosine (ms(2)i(6)A) at position 37 in tRNAs that read codons beginning with uridine. The polypeptide is tRNA-2-methylthio-N(6)-dimethylallyladenosine synthase (Porphyromonas gingivalis (strain ATCC BAA-308 / W83)).